Reading from the N-terminus, the 906-residue chain is Protein kintoun (906 aa).

Ser376 is modified (phosphoserine). 2 disordered regions span residues Gln614–Arg691 and Arg793–Met906. Residues Lys618–Arg631 show a composition bias toward basic residues. The span at Glu639 to Gln655 shows a compositional bias: basic and acidic residues. Over residues Arg793 to Gln808 the composition is skewed to basic residues. Ser812 carries the phosphoserine modification. Over residues Ala837 to Gly850 the composition is skewed to polar residues. 2 stretches are compositionally biased toward basic and acidic residues: residues His851 to Gly865 and Asn875 to Ala887. Residues Glu894–Met906 are compositionally biased toward acidic residues.

The protein belongs to the PIH1 family. Kintoun subfamily. Interacts with Pp1alpha-96A, Pp1-87B, Pp1-13C and flw.

The protein localises to the cytoplasm. Its function is as follows. Required for cytoplasmic pre-assembly of axonemal dyneins, thereby playing a central role in motility in cilia and flagella. Involved in pre-assembly of dynein arm complexes in the cytoplasm before intraflagellar transport loads them for the ciliary compartment. This chain is Protein kintoun, found in Drosophila virilis (Fruit fly).